Reading from the N-terminus, the 100-residue chain is EKC/KEOPS complex subunit GON7 (100 aa).

M1 bears the N-acetylmethionine mark. The disordered stretch occupies residues 50-100 (SPVQGEAQDRVAAAPEEALDGDDEDDAEDENNIDNRTNSDGPTAKRPKPPS). The span at 66 to 81 (EALDGDDEDDAEDENN) shows a compositional bias: acidic residues.

In terms of assembly, component of the EKC/KEOPS complex composed of at least GON7, TP53RK, TPRKB, OSGEP and LAGE3; the whole complex dimerizes.

Its subcellular location is the nucleus. Functionally, component of the EKC/KEOPS complex that is required for the formation of a threonylcarbamoyl group on adenosine at position 37 (t(6)A37) in tRNAs that read codons beginning with adenine. The complex is probably involved in the transfer of the threonylcarbamoyl moiety of threonylcarbamoyl-AMP (TC-AMP) to the N6 group of A37. GON7 plays a supporting role to the catalytic subunit OSGEP in the complex. This Sus scrofa (Pig) protein is EKC/KEOPS complex subunit GON7.